The chain runs to 125 residues: Small ribosomal subunit protein bS6 (125 aa).

A disordered region spans residues 96–125 (VTEASPMKAAKEERKPLAEVENNDFEDAEE). Positions 104–113 (AAKEERKPLA) are enriched in basic and acidic residues. Over residues 116–125 (ENNDFEDAEE) the composition is skewed to acidic residues.

Belongs to the bacterial ribosomal protein bS6 family.

Binds together with bS18 to 16S ribosomal RNA. The chain is Small ribosomal subunit protein bS6 from Haemophilus influenzae (strain 86-028NP).